Reading from the N-terminus, the 109-residue chain is Nucleoid-associated protein YbaB (109 aa).

The protein belongs to the YbaB/EbfC family. In terms of assembly, homodimer.

The protein resides in the cytoplasm. Its subcellular location is the nucleoid. In terms of biological role, binds to DNA and alters its conformation. May be involved in regulation of gene expression, nucleoid organization and DNA protection. This Escherichia coli O8 (strain IAI1) protein is Nucleoid-associated protein YbaB.